We begin with the raw amino-acid sequence, 203 residues long: N-(5'-phosphoribosyl)anthranilate isomerase (203 aa).

Belongs to the TrpF family.

It carries out the reaction N-(5-phospho-beta-D-ribosyl)anthranilate = 1-(2-carboxyphenylamino)-1-deoxy-D-ribulose 5-phosphate. The protein operates within amino-acid biosynthesis; L-tryptophan biosynthesis; L-tryptophan from chorismate: step 3/5. The polypeptide is N-(5'-phosphoribosyl)anthranilate isomerase (Thermoanaerobacter pseudethanolicus (strain ATCC 33223 / 39E) (Clostridium thermohydrosulfuricum)).